A 101-amino-acid chain; its full sequence is Small ribosomal subunit protein uS14 (101 aa).

The protein belongs to the universal ribosomal protein uS14 family. Part of the 30S ribosomal subunit. Contacts proteins S3 and S10.

Functionally, binds 16S rRNA, required for the assembly of 30S particles and may also be responsible for determining the conformation of the 16S rRNA at the A site. This Chlamydia muridarum (strain MoPn / Nigg) protein is Small ribosomal subunit protein uS14.